We begin with the raw amino-acid sequence, 106 residues long: V-type proton ATPase subunit G2 (106 aa).

Methionine 1 carries the N-acetylmethionine modification. Residues 31-67 (LKQAKEEAETEVAEHKTSTEQGFQRKLEATSGDSGAN) form a disordered region. A compositionally biased stretch (basic and acidic residues) spans 33-58 (QAKEEAETEVAEHKTSTEQGFQRKLE).

The protein belongs to the V-ATPase G subunit family. As to quaternary structure, V-ATPase is a heteromultimeric enzyme composed of a peripheral catalytic V1 complex (components A to H) attached to an integral membrane V0 proton pore complex (components: a, c, c'', d and e).

It is found in the vacuole membrane. Functionally, catalytic subunit of the peripheral V1 complex of vacuolar ATPase (V-ATPase). V-ATPase is responsible for acidifying a variety of intracellular compartments in eukaryotic cells. The sequence is that of V-type proton ATPase subunit G2 (VHA-G2) from Arabidopsis thaliana (Mouse-ear cress).